The primary structure comprises 258 residues: uncharacterized protein (258 aa).

The region spanning 3–58 (VAERQQKIVEIVNMRSSIRVSELSDIFSVTEETIRRDLEKLEKEHKLSRSHGGAVS) is the HTH deoR-type domain. The H-T-H motif DNA-binding region spans 20–39 (IRVSELSDIFSVTEETIRRD).

This is an uncharacterized protein from Bacillus subtilis (strain 168).